The primary structure comprises 406 residues: Argininosuccinate synthase (406 aa).

ATP contacts are provided by residues 10–18 (AYSGGLDTS) and alanine 37. L-citrulline is bound by residues tyrosine 88 and serine 93. Glycine 118 provides a ligand contact to ATP. L-aspartate contacts are provided by threonine 120, asparagine 124, and aspartate 125. Asparagine 124 lines the L-citrulline pocket. Residues arginine 128, serine 179, serine 188, glutamate 264, and tyrosine 276 each coordinate L-citrulline.

It belongs to the argininosuccinate synthase family. Type 1 subfamily. In terms of assembly, homotetramer.

Its subcellular location is the cytoplasm. It catalyses the reaction L-citrulline + L-aspartate + ATP = 2-(N(omega)-L-arginino)succinate + AMP + diphosphate + H(+). It functions in the pathway amino-acid biosynthesis; L-arginine biosynthesis; L-arginine from L-ornithine and carbamoyl phosphate: step 2/3. This Azotobacter vinelandii (strain DJ / ATCC BAA-1303) protein is Argininosuccinate synthase.